The sequence spans 1194 residues: Chitin synthase C (1194 aa).

2 disordered regions span residues 1 to 91 (MSLP…PNYL) and 136 to 177 (GAHG…RRKA). Basic and acidic residues predominate over residues 12-23 (PRREETSAFREP). Residues 42-54 (PRHHRHHRSHSSR) are compositionally biased toward basic residues. Basic and acidic residues-rich tracts occupy residues 55-69 (HQHD…EGGI) and 76-85 (VKPERGRMDP). Residues 150–164 (TRHRSKKRKGSRKIS) are compositionally biased toward basic residues. A helical transmembrane segment spans residues 221-241 (IGLISIILMIAAFVGFLTFGF). N-linked (GlcNAc...) asparagine glycans are attached at residues N351 and N390. A helical transmembrane segment spans residues 476–496 (YVSLIFILSIVIVKFAFALLF). N-linked (GlcNAc...) asparagine glycosylation is found at N582, N608, N885, and N1014. 3 helical membrane passes run 1039 to 1059 (FVIF…SFTI), 1073 to 1093 (IIPL…VVVT), and 1097 to 1117 (LVYV…NFVL).

It belongs to the chitin synthase family. Class V subfamily.

Its subcellular location is the cell membrane. It carries out the reaction [(1-&gt;4)-N-acetyl-beta-D-glucosaminyl](n) + UDP-N-acetyl-alpha-D-glucosamine = [(1-&gt;4)-N-acetyl-beta-D-glucosaminyl](n+1) + UDP + H(+). Polymerizes chitin, a structural polymer of the cell wall and septum, by transferring the sugar moiety of UDP-GlcNAc to the non-reducing end of the growing chitin polymer. Responsible for synthesis of 30-40% of the chitin in the cells. ChsA and chsD play redundant functions in conidia formation. The chitin synthesized by the chsD-encoded isozyme contributes to the rigidity of the walls of germinating conidia, of the subapical region of hyphae, and of conidiophore vesicles, but is not necessary for normal morphology of these cells. The sequence is that of Chitin synthase C from Emericella nidulans (strain FGSC A4 / ATCC 38163 / CBS 112.46 / NRRL 194 / M139) (Aspergillus nidulans).